A 249-amino-acid chain; its full sequence is Bis(5'-nucleosyl)-tetraphosphatase PrpE [asymmetrical] (249 aa).

This sequence belongs to the PrpE family. Ni(2+) is required as a cofactor.

It catalyses the reaction P(1),P(4)-bis(5'-guanosyl) tetraphosphate + H2O = GMP + GTP + 2 H(+). Asymmetrically hydrolyzes Ap4p to yield AMP and ATP. This Bacillus velezensis (strain DSM 23117 / BGSC 10A6 / LMG 26770 / FZB42) (Bacillus amyloliquefaciens subsp. plantarum) protein is Bis(5'-nucleosyl)-tetraphosphatase PrpE [asymmetrical].